The primary structure comprises 353 residues: UDP-N-acetylglucosamine--N-acetylmuramyl-(pentapeptide) pyrophosphoryl-undecaprenol N-acetylglucosamine transferase (353 aa).

Residues 10–12, N124, S183, and Q283 contribute to the UDP-N-acetyl-alpha-D-glucosamine site; that span reads TGG.

Belongs to the glycosyltransferase 28 family. MurG subfamily.

The protein localises to the cell inner membrane. It catalyses the reaction di-trans,octa-cis-undecaprenyl diphospho-N-acetyl-alpha-D-muramoyl-L-alanyl-D-glutamyl-meso-2,6-diaminopimeloyl-D-alanyl-D-alanine + UDP-N-acetyl-alpha-D-glucosamine = di-trans,octa-cis-undecaprenyl diphospho-[N-acetyl-alpha-D-glucosaminyl-(1-&gt;4)]-N-acetyl-alpha-D-muramoyl-L-alanyl-D-glutamyl-meso-2,6-diaminopimeloyl-D-alanyl-D-alanine + UDP + H(+). It participates in cell wall biogenesis; peptidoglycan biosynthesis. Its function is as follows. Cell wall formation. Catalyzes the transfer of a GlcNAc subunit on undecaprenyl-pyrophosphoryl-MurNAc-pentapeptide (lipid intermediate I) to form undecaprenyl-pyrophosphoryl-MurNAc-(pentapeptide)GlcNAc (lipid intermediate II). This is UDP-N-acetylglucosamine--N-acetylmuramyl-(pentapeptide) pyrophosphoryl-undecaprenol N-acetylglucosamine transferase from Helicobacter pylori (strain Shi470).